The chain runs to 100 residues: Aspartyl/glutamyl-tRNA(Asn/Gln) amidotransferase subunit C (100 aa).

The protein belongs to the GatC family. As to quaternary structure, heterotrimer of A, B and C subunits.

The catalysed reaction is L-glutamyl-tRNA(Gln) + L-glutamine + ATP + H2O = L-glutaminyl-tRNA(Gln) + L-glutamate + ADP + phosphate + H(+). It catalyses the reaction L-aspartyl-tRNA(Asn) + L-glutamine + ATP + H2O = L-asparaginyl-tRNA(Asn) + L-glutamate + ADP + phosphate + 2 H(+). Its function is as follows. Allows the formation of correctly charged Asn-tRNA(Asn) or Gln-tRNA(Gln) through the transamidation of misacylated Asp-tRNA(Asn) or Glu-tRNA(Gln) in organisms which lack either or both of asparaginyl-tRNA or glutaminyl-tRNA synthetases. The reaction takes place in the presence of glutamine and ATP through an activated phospho-Asp-tRNA(Asn) or phospho-Glu-tRNA(Gln). In Petrotoga mobilis (strain DSM 10674 / SJ95), this protein is Aspartyl/glutamyl-tRNA(Asn/Gln) amidotransferase subunit C.